We begin with the raw amino-acid sequence, 223 residues long: ATP-dependent Clp protease proteolytic subunit 2 (223 aa).

The segment at 1–40 (MHAGSGNDMDITRMTPTRLDDEPDAPEPETREDDNKTLNS) is disordered. A compositionally biased stretch (acidic residues) spans 21–32 (DEPDAPEPETRE). S124 functions as the Nucleophile in the catalytic mechanism. The active site involves H149.

Belongs to the peptidase S14 family. As to quaternary structure, fourteen ClpP subunits assemble into 2 heptameric rings which stack back to back to give a disk-like structure with a central cavity, resembling the structure of eukaryotic proteasomes.

It is found in the cytoplasm. It carries out the reaction Hydrolysis of proteins to small peptides in the presence of ATP and magnesium. alpha-casein is the usual test substrate. In the absence of ATP, only oligopeptides shorter than five residues are hydrolyzed (such as succinyl-Leu-Tyr-|-NHMec, and Leu-Tyr-Leu-|-Tyr-Trp, in which cleavage of the -Tyr-|-Leu- and -Tyr-|-Trp bonds also occurs).. In terms of biological role, cleaves peptides in various proteins in a process that requires ATP hydrolysis. Has a chymotrypsin-like activity. Plays a major role in the degradation of misfolded proteins. In Gluconobacter oxydans (strain 621H) (Gluconobacter suboxydans), this protein is ATP-dependent Clp protease proteolytic subunit 2.